The primary structure comprises 346 residues: UPF0718 protein YraQ (346 aa).

9 consecutive transmembrane segments (helical) span residues 12-32 (PIQW…LWYV), 71-91 (MIYF…GSLI), 113-133 (LLGT…APVA), 146-166 (ALAF…FMGF), 167-187 (VLGW…VLLI), 223-243 (ALWT…LVLG), 260-280 (SLMW…PTAA), 296-316 (APAL…LIML), and 326-346 (WLTG…ALLF).

This sequence belongs to the UPF0718 family.

It localises to the cell membrane. The polypeptide is UPF0718 protein YraQ (yraQ) (Escherichia coli (strain K12)).